The sequence spans 458 residues: Vasoactive intestinal polypeptide receptor 1 (458 aa).

A signal peptide spans 1–31 (MRPLSPPPAGWFCVLAGVLACVLGPVGSWAV). The Extracellular segment spans residues 32-142 (GLQQEECDYL…DEQQTVFYNS (111 aa)). 5 cysteine pairs are disulfide-bonded: Cys38–Cys209, Cys51–Cys73, Cys64–Cys106, Cys87–Cys123, and Cys216–Cys286. 4 N-linked (GlcNAc...) asparagine glycosylation sites follow: Asn59, Asn70, Asn101, and Asn105. A helical membrane pass occupies residues 143–167 (VKTGYTIGYSLSLAALLVATAILSL). Over 168-175 (FRKLHCTR) the chain is Cytoplasmic. The helical transmembrane segment at 176-197 (NYIHMHLFISFILRATAVFIKD) threads the bilayer. At 198–217 (LALFDSEESDHCSKGSVGCK) the chain is on the extracellular side. A helical membrane pass occupies residues 218-242 (AAVVLFQYCVMANFFWLLVEGLYLH). Over 243-255 (TLLAVSFFSERKY) the chain is Cytoplasmic. Residues 256 to 277 (FWGYIFVGWGVPSTFIMVWTVV) traverse the membrane as a helical segment. Residues 278-292 (RIHFEDYGCWDTIHS) are Extracellular-facing. The helical transmembrane segment at 293–317 (SLWWIIKAPILASILVNFILFIRII) threads the bilayer. Residues 318–339 (GILVQKLRPPDVGKSDNSPYSR) lie on the Cytoplasmic side of the membrane. A helical transmembrane segment spans residues 340 to 360 (LAKSTLLLIPLFGVHYIMFAF). The Extracellular segment spans residues 361-368 (FPDNFKAE). A helical transmembrane segment spans residues 369 to 392 (VKMVFELIVGSFQGCVVAILYCFL). Residues 393–458 (NGEVQAELRR…SSFQAEVSLV (66 aa)) are Cytoplasmic-facing.

It belongs to the G-protein coupled receptor 2 family. Interacts with ADCYAP1/PACAP; activated by both PACAP27 and PACAP38 neuropeptides. Interacts with VIP; the interaction results in VIPR1 activation.

It is found in the cell membrane. In terms of biological role, g protein-coupled receptor activated by the neuropeptides vasoactive intestinal peptide (VIP) and pituitary adenylate cyclase-activating polypeptide (ADCYAP1/PACAP). Binds VIP and both PACAP27 and PACAP38 bioactive peptides with the following order of ligand affinity VIP = PACAP27 &gt; PACAP38. Ligand binding causes a conformation change that triggers signaling via guanine nucleotide-binding proteins (G proteins) and modulates the activity of downstream effectors. Activates cAMP-dependent pathway. The chain is Vasoactive intestinal polypeptide receptor 1 (VIPR1) from Sus scrofa (Pig).